The primary structure comprises 325 residues: Oligopeptide transport system permease protein OppB (325 aa).

6 helical membrane passes run 12–32, 102–122, 135–155, 189–208, 248–268, and 290–310; these read YLVLLALASFLTYCLTSLAFS, LVVGSVFGTVAGVVIGAWGAI, LALLVLSTPTFVVANLLILGA, LQHLILPSLTLALAAAAGFS, IPMATLFAYGVAGLVTGAVFV, and TNIVAAITVFSGAVVLLAGLL. In terms of domain architecture, ABC transmembrane type-1 spans 95–311; sequence IGVSLRLLVV…AVVLLAGLLS (217 aa).

This sequence belongs to the binding-protein-dependent transport system permease family. OppBC subfamily. As to quaternary structure, the complex is composed of an ATP-binding protein (OppD), two transmembrane proteins (OppB and OppC) and a solute-binding protein (OppA).

Its subcellular location is the cell inner membrane. Functionally, part of the ABC transporter complex OppABCD involved in the uptake of oligopeptides. Responsible for the translocation of the substrate across the membrane. This chain is Oligopeptide transport system permease protein OppB, found in Mycobacterium bovis (strain ATCC BAA-935 / AF2122/97).